The chain runs to 1051 residues: Ubiquitin-activating enzyme E1 1 (1051 aa).

2 consecutive repeat copies span residues 56-194 (GRET…GSVF) and 453-605 (GSKL…QMVI). Positions 56-605 (GRETMKRLFG…GAKCNTQMVI (550 aa)) are 2 approximate repeats. Residues Ala-472, Asp-498, Arg-509, Lys-522, and 570-571 (DN) contribute to the ATP site. The active-site Glycyl thioester intermediate is the Cys-626.

Belongs to the ubiquitin-activating E1 family. As to quaternary structure, monomer. Post-translationally, the N-terminus is blocked.

The enzyme catalyses ATP + ubiquitin + [E1 ubiquitin-activating enzyme]-L-cysteine = AMP + diphosphate + S-ubiquitinyl-[E1 ubiquitin-activating enzyme]-L-cysteine.. Its pathway is protein modification; protein ubiquitination. In terms of biological role, activates ubiquitin by first adenylating its C-terminal glycine residue with ATP, and thereafter linking this residue to the side chain of a cysteine residue in E1, yielding a ubiquitin-E1 thioester and free AMP. This chain is Ubiquitin-activating enzyme E1 1, found in Triticum aestivum (Wheat).